Reading from the N-terminus, the 560-residue chain is Membrane protein insertase YidC (560 aa).

6 helical membrane-spanning segments follow: residues 5–25, 334–354, 357–377, 431–451, 476–496, and 522–542; these read IINL…WQYF, AIDF…MNFF, YVGN…LLMF, LPIL…YVTI, LFGL…WPIL, and FMPL…LIYW.

It belongs to the OXA1/ALB3/YidC family. Type 1 subfamily. As to quaternary structure, interacts with the Sec translocase complex via SecD. Specifically interacts with transmembrane segments of nascent integral membrane proteins during membrane integration.

Its subcellular location is the cell inner membrane. Its function is as follows. Required for the insertion and/or proper folding and/or complex formation of integral membrane proteins into the membrane. Involved in integration of membrane proteins that insert both dependently and independently of the Sec translocase complex, as well as at least some lipoproteins. Aids folding of multispanning membrane proteins. The polypeptide is Membrane protein insertase YidC (Rickettsia africae (strain ESF-5)).